The following is a 502-amino-acid chain: MATESALIKVHVKSPSNKYDVEIAADASVSELKDKVLVFVPTANKEQVCIIYTGKILKDEETLTQHKIADGHTVHLVIRNQARPTPAPAAATPTASSAPSSNPTPSSQPNPTNNPFAAMGGMGSPADILNNPDAMRSVMDNPITQQLLGNPEFMRTIIQSNPQFQALIERNPEVGHILNDPNVMRQTMEMIRNPNMFQEMMRNHDQAIRNLQGIPGGEAALERLYNDVQEPLLNSATNSLSGNPFASLRGDQSSEPRVDRAGQENNEALPNPWASNANQATNNQSNNRSADFNSLLDSPGISSLMEQMMSNPSMQASMFSPEVINSIRQNMSNNPGLIDSIVGQIPSARDNPQISEGIRRSFPQMLNMMSDPSVMEAMRNPRVSEAFRQIQEGFSTLRREAPQLLNLFQAGAMGGGAFGSDANASSAGANSANGLADLFNSMNMGGGRPSSTAAPVNPEQTYASQLEQLQSMGFSDRARNVAALTATFGDLNAAVERLLNSP.

The 76-residue stretch at 8–83 folds into the Ubiquitin-like domain; it reads IKVHVKSPSN…VHLVIRNQAR (76 aa). Residues 84–115 show a composition bias toward low complexity; sequence PTPAPAAATPTASSAPSSNPTPSSQPNPTNNP. The disordered stretch occupies residues 84 to 136; it reads PTPAPAAATPTASSAPSSNPTPSSQPNPTNNPFAAMGGMGSPADILNNPDAMR. 2 STI1 domains span residues 124–157 and 161–200; these read SPAD…MRTI and NPQF…FQEM. Over residues 235 to 251 the composition is skewed to polar residues; the sequence is SATNSLSGNPFASLRGD. The interval 235 to 294 is disordered; it reads SATNSLSGNPFASLRGDQSSEPRVDRAGQENNEALPNPWASNANQATNNQSNNRSADFNS. A compositionally biased stretch (basic and acidic residues) spans 252-262; the sequence is QSSEPRVDRAG. Positions 274-290 are enriched in low complexity; sequence ASNANQATNNQSNNRSA. 2 STI1 domains span residues 289 to 327 and 351 to 387; these read SADF…INSI and NPQI…SEAF. Positions 455-501 constitute a UBA domain; the sequence is PVNPEQTYASQLEQLQSMGFSDRARNVAALTATFGDLNAAVERLLNS.

Expressed in the pharynx, hypodermis, intestine and head neurons. Upon ER stress, expressed predominantly in pharyngeal muscle, hypodermis and intestine.

Its function is as follows. May play a role in the ER-associated protein degradation pathway (ERAD) possibly via its interaction with ER-localized proteins ubxn-4 and cdc-48.1 and/or cdc48.2, providing a link between the polyubiquitinated ERAD substrates and the proteasome. Also plays an important role in the regulation of other protein degradation mechanisms and pathways including ubiquitin-proteasome system (UPS) and autophagy. Mediates the proteasomal targeting of misfolded or accumulated proteins for degradation by binding (via UBA domain) to their polyubiquitin chains and by interacting (via ubiquitin-like domain) with the subunits of the proteasome. Collaborates with POST (F36D4.5) in the export of ubiquitinated proteins from the nucleus to the cytoplasm. Also acts as a regulator of DNA repair by inhibiting homologous recombination repair, thereby redirecting double-strand break repair toward non-homologous end joining (NHEJ). This Caenorhabditis elegans protein is Ubiquilin.